We begin with the raw amino-acid sequence, 1207 residues long: Brassinosteroid LRR receptor kinase (1207 aa).

A signal peptide spans 1 to 34; the sequence is MKAHKTVFNQHPLSLNKLFFVLLLIFFLPPASPA. The Cys pair 1 signature appears at 71–78; that stretch reads CSFTGVSC. LRR repeat units lie at residues 109 to 131, 135 to 157, 161 to 181, 186 to 207, 213 to 234, 235 to 257, 258 to 280, 282 to 304, 305 to 325, 329 to 350, 353 to 374, 378 to 400, 402 to 423, 428 to 450, 452 to 474, 476 to 499, 500 to 523, 524 to 547, 548 to 570, and 572 to 594; these read NLESLVLKNANLSGSLTSAAKSQ, TLDSIDLAENTISGPISDISSFG, NLKSLNLSKNFLDPPGKEMLK, SLQVLDLSYNNISGFNLFPWVS, ELEFFSLKGNKLAGSIPELDFK, NLSYLDLSANNFSTVFPSFKDCS, NLQHLDLSSNKFYGDIGSSLSSC, KLSFLNLTNNQFVGLVPKLPSES, LQYLYLRGNDFQGVYPNQLAD, TVVELDLSYNNFSGMVPESLGE, SLELVDISYNNFSGKLPVDTLS, NIKTMVLSFNKFVGGLPDSFSNL, KLETLDMSSNNLTGVIPSGICK, NLKVLYLQNNLFKGPIPDSLSNC, QLVSLDLSFNYLTGSIPSSLGSL, KLKDLILWLNQLSGEIPQELMYLQ, ALENLILDFNDLTGPIPASLSNCT, KLNWISLSNNQLSGEIPASLGRLS, NLAILKLGNNSISGNIPAELGNC, and SLIWLDLNTNFLNGSIPPPLFKQ. An N-linked (GlcNAc...) asparagine glycan is attached at Asn-119. N-linked (GlcNAc...) asparagine glycans are attached at residues Asn-166 and Asn-196. N-linked (GlcNAc...) asparagine glycans are attached at residues Asn-235 and Asn-245. An N-linked (GlcNAc...) asparagine glycan is attached at Asn-287. Asn-339 and Asn-363 each carry an N-linked (GlcNAc...) asparagine glycan. N-linked (GlcNAc...) asparagine glycosylation is found at Asn-412 and Asn-449. The N-linked (GlcNAc...) asparagine glycan is linked to Asn-521. 4 N-linked (GlcNAc...) asparagine glycosylation sites follow: Asn-556, Asn-584, Asn-646, and Asn-662. LRR repeat units follow at residues 664–686, 688–711, 712–735, and 736–758; these read SMIFLDLSYNKLEGSIPKELGAM, YLSILNLGHNDLSGMIPQQLGGLK, NVAILDLSYNRFNGTIPNSLTSLT, and LLGEIDLSNNNLSGMIPESAPFD. Asn-724, Asn-746, and Asn-767 each carry an N-linked (GlcNAc...) asparagine glycan. The Cys pair 2 signature appears at 771–779; that stretch reads CGYPLPIPC. Residues 803–823 traverse the membrane as a helical segment; it reads SVAMGLLFSLFCIFGLIIVAI. A Protein kinase domain is found at 888-1163; that stretch reads FHNDSLVGSG…IQVMAMFKEI (276 aa). ATP contacts are provided by residues 894 to 902 and Lys-916; that span reads VGSGGFGDV. The active-site Proton acceptor is the Asp-1014.

The protein belongs to the protein kinase superfamily. Ser/Thr protein kinase family.

It is found in the cell membrane. The enzyme catalyses L-seryl-[protein] + ATP = O-phospho-L-seryl-[protein] + ADP + H(+). The catalysed reaction is L-threonyl-[protein] + ATP = O-phospho-L-threonyl-[protein] + ADP + H(+). In terms of biological role, receptor with a serine/threonine-protein kinase activity. Regulates, in response to brassinosteroid binding, a signaling cascade involved in plant development, including expression of light- and stress-regulated genes, promotion of cell elongation, normal leaf and chloroplast senescence, and flowering. May be involved in a feedback regulation of brassinosteroid biosynthesis. May be also involved in the perception of systemin, a peptide hormone responsible for the systemic activation of defense genes in leaves of wounded plants. This is Brassinosteroid LRR receptor kinase (CURL3) from Solanum lycopersicum (Tomato).